The primary structure comprises 391 residues: Phosphoglycerate kinase (391 aa).

Substrate is bound by residues 21-23, arginine 36, 59-62, arginine 113, and arginine 146; these read DLN and HLGR. ATP-binding positions include lysine 197, glutamate 319, and 345 to 348; that span reads GGDT.

Belongs to the phosphoglycerate kinase family. In terms of assembly, monomer.

The protein localises to the cytoplasm. It catalyses the reaction (2R)-3-phosphoglycerate + ATP = (2R)-3-phospho-glyceroyl phosphate + ADP. The protein operates within carbohydrate degradation; glycolysis; pyruvate from D-glyceraldehyde 3-phosphate: step 2/5. The polypeptide is Phosphoglycerate kinase (Xylella fastidiosa (strain Temecula1 / ATCC 700964)).